The sequence spans 431 residues: Histidinol dehydrogenase (431 aa).

NAD(+) contacts are provided by Tyr131, Gln193, and Asn216. The substrate site is built by Ser239, Gln261, and His264. The Zn(2+) site is built by Gln261 and His264. Active-site proton acceptor residues include Glu329 and His330. Residues His330, Asp363, Glu417, and His422 each contribute to the substrate site. A Zn(2+)-binding site is contributed by Asp363. His422 is a Zn(2+) binding site.

It belongs to the histidinol dehydrogenase family. Requires Zn(2+) as cofactor.

The enzyme catalyses L-histidinol + 2 NAD(+) + H2O = L-histidine + 2 NADH + 3 H(+). Its pathway is amino-acid biosynthesis; L-histidine biosynthesis; L-histidine from 5-phospho-alpha-D-ribose 1-diphosphate: step 9/9. Catalyzes the sequential NAD-dependent oxidations of L-histidinol to L-histidinaldehyde and then to L-histidine. The polypeptide is Histidinol dehydrogenase (Clostridium acetobutylicum (strain ATCC 824 / DSM 792 / JCM 1419 / IAM 19013 / LMG 5710 / NBRC 13948 / NRRL B-527 / VKM B-1787 / 2291 / W)).